The following is a 461-amino-acid chain: Deoxyguanosinetriphosphate triphosphohydrolase-like protein (461 aa).

The tract at residues 22-41 (ERFLPDPPREKDNRPPFRRD) is disordered. Basic and acidic residues predominate over residues 24–41 (FLPDPPREKDNRPPFRRD). The HD domain occupies 72-285 (RLTHSLEVAQ…MELADDIAYG (214 aa)).

The protein belongs to the dGTPase family. Type 2 subfamily.

The sequence is that of Deoxyguanosinetriphosphate triphosphohydrolase-like protein from Haemophilus influenzae (strain PittEE).